A 416-amino-acid chain; its full sequence is Bifunctional protein GlmU (416 aa).

The tract at residues 1–229 (MTNYAIILAA…FNESLGVNDR (229 aa)) is pyrophosphorylase. UDP-N-acetyl-alpha-D-glucosamine is bound by residues 8-11 (LAAG), Lys-22, Gln-72, and 77-78 (GT). Residue Asp-102 participates in Mg(2+) binding. Residues Gly-139, Glu-154, Asn-169, and Asn-227 each contribute to the UDP-N-acetyl-alpha-D-glucosamine site. Asn-227 contacts Mg(2+). The tract at residues 230–250 (VALATAETVMRQRITQKHMVN) is linker. Positions 251–416 (GVTFQNPETV…DSHCTFGSWR (166 aa)) are N-acetyltransferase. Positions 332 and 350 each coordinate UDP-N-acetyl-alpha-D-glucosamine. Catalysis depends on His-362, which acts as the Proton acceptor. UDP-N-acetyl-alpha-D-glucosamine is bound by residues Tyr-365 and Asn-376. Acetyl-CoA is bound by residues Ala-379 and 385–386 (NY).

It in the N-terminal section; belongs to the N-acetylglucosamine-1-phosphate uridyltransferase family. In the C-terminal section; belongs to the transferase hexapeptide repeat family. As to quaternary structure, homotrimer. Mg(2+) serves as cofactor.

The protein resides in the cytoplasm. The enzyme catalyses alpha-D-glucosamine 1-phosphate + acetyl-CoA = N-acetyl-alpha-D-glucosamine 1-phosphate + CoA + H(+). The catalysed reaction is N-acetyl-alpha-D-glucosamine 1-phosphate + UTP + H(+) = UDP-N-acetyl-alpha-D-glucosamine + diphosphate. It participates in nucleotide-sugar biosynthesis; UDP-N-acetyl-alpha-D-glucosamine biosynthesis; N-acetyl-alpha-D-glucosamine 1-phosphate from alpha-D-glucosamine 6-phosphate (route II): step 2/2. Its pathway is nucleotide-sugar biosynthesis; UDP-N-acetyl-alpha-D-glucosamine biosynthesis; UDP-N-acetyl-alpha-D-glucosamine from N-acetyl-alpha-D-glucosamine 1-phosphate: step 1/1. The protein operates within bacterial outer membrane biogenesis; LPS lipid A biosynthesis. Its function is as follows. Catalyzes the last two sequential reactions in the de novo biosynthetic pathway for UDP-N-acetylglucosamine (UDP-GlcNAc). The C-terminal domain catalyzes the transfer of acetyl group from acetyl coenzyme A to glucosamine-1-phosphate (GlcN-1-P) to produce N-acetylglucosamine-1-phosphate (GlcNAc-1-P), which is converted into UDP-GlcNAc by the transfer of uridine 5-monophosphate (from uridine 5-triphosphate), a reaction catalyzed by the N-terminal domain. This chain is Bifunctional protein GlmU, found in Streptococcus pyogenes serotype M12 (strain MGAS2096).